A 291-amino-acid chain; its full sequence is 29 kDa ribonucleoprotein B, chloroplastic (291 aa).

Residues 87–165 (LKLFVGNLPF…RAIRVNAGPA (79 aa)) form the RRM 1 domain. The disordered stretch occupies residues 164–202 (PAPAKRENSSFGGGRGGNSSYGGGRDGNSSFGGARGGRS). Residues 166–206 (PAKRENSSFGGGRGGNSSYGGGRDGNSSFGGARGGRSVDSS) are linker (Gly-rich). Residues 174 to 189 (FGGGRGGNSSYGGGRD) are compositionally biased toward gly residues. The region spanning 207–285 (NRVYVGNLSW…RSIRVSAAEE (79 aa)) is the RRM 2 domain.

The protein localises to the plastid. It is found in the chloroplast. Its function is as follows. Could be involved in splicing and/or processing of chloroplast RNA's. This Nicotiana sylvestris (Wood tobacco) protein is 29 kDa ribonucleoprotein B, chloroplastic.